The chain runs to 280 residues: Cytochrome bc1 complex cytochrome c subunit (280 aa).

Residues L25–L45 form a helical membrane-spanning segment. Cytochrome c domains are found at residues A60–G140 and N161–T239. Residues C73, C76, H77, C174, C177, and H178 each coordinate heme c. A helical transmembrane segment spans residues G258–A278.

The cytochrome bc1 complex is composed of a cytochrome b (QcrB), the Rieske iron-sulfur protein (QcrA) and a diheme cytochrome c (QcrC) subunit. Post-translationally, binds 2 heme c groups covalently per subunit.

Its subcellular location is the cell membrane. It carries out the reaction a quinol + 2 Fe(III)-[cytochrome c](out) = a quinone + 2 Fe(II)-[cytochrome c](out) + 2 H(+)(out). Its function is as follows. Cytochrome b subunit of the cytochrome bc1 complex, an essential component of the respiratory electron transport chain required for ATP synthesis. The bc1 complex catalyzes the oxidation of ubiquinol and the reduction of cytochrome c in the respiratory chain. The bc1 complex operates through a Q-cycle mechanism that couples electron transfer to generation of the proton gradient that drives ATP synthesis. This is Cytochrome bc1 complex cytochrome c subunit (qcrC) from Mycobacterium bovis (strain ATCC BAA-935 / AF2122/97).